Consider the following 191-residue polypeptide: Orotate phosphoribosyltransferase (191 aa).

Residue 114–122 participates in 5-phospho-alpha-D-ribose 1-diphosphate binding; it reads EDVVTTGKS. Positions 118 and 146 each coordinate orotate.

The protein belongs to the purine/pyrimidine phosphoribosyltransferase family. PyrE subfamily. In terms of assembly, homodimer. Requires Mg(2+) as cofactor.

It catalyses the reaction orotidine 5'-phosphate + diphosphate = orotate + 5-phospho-alpha-D-ribose 1-diphosphate. Its pathway is pyrimidine metabolism; UMP biosynthesis via de novo pathway; UMP from orotate: step 1/2. Its function is as follows. Catalyzes the transfer of a ribosyl phosphate group from 5-phosphoribose 1-diphosphate to orotate, leading to the formation of orotidine monophosphate (OMP). This Clostridium botulinum (strain Langeland / NCTC 10281 / Type F) protein is Orotate phosphoribosyltransferase.